The primary structure comprises 138 residues: Ribosomal RNA large subunit methyltransferase H (138 aa).

Residues Gly-86 and 105-110 (LSPLTF) contribute to the S-adenosyl-L-methionine site.

This sequence belongs to the RNA methyltransferase RlmH family. Homodimer.

It localises to the cytoplasm. The catalysed reaction is pseudouridine(1915) in 23S rRNA + S-adenosyl-L-methionine = N(3)-methylpseudouridine(1915) in 23S rRNA + S-adenosyl-L-homocysteine + H(+). In terms of biological role, specifically methylates the pseudouridine at position 1915 (m3Psi1915) in 23S rRNA. The protein is Ribosomal RNA large subunit methyltransferase H of Prochlorococcus marinus (strain MIT 9215).